The following is a 337-amino-acid chain: Ketol-acid reductoisomerase (NADP(+)) (337 aa).

In terms of domain architecture, KARI N-terminal Rossmann spans 3-183; that stretch reads VEMFYDDDAD…GGARAGVIKT (181 aa). NADP(+) is bound by residues 26–29, K49, S52, S54, and 84–87; these read YGSQ and DTAQ. H109 is an active-site residue. Residue G135 participates in NADP(+) binding. In terms of domain architecture, KARI C-terminal knotted spans 184–329; the sequence is TFKEETETDL…KKLRDLMSWV (146 aa). Residues D192, E196, E228, and E232 each contribute to the Mg(2+) site. S253 is a substrate binding site.

Belongs to the ketol-acid reductoisomerase family. Mg(2+) is required as a cofactor.

The enzyme catalyses (2R)-2,3-dihydroxy-3-methylbutanoate + NADP(+) = (2S)-2-acetolactate + NADPH + H(+). It catalyses the reaction (2R,3R)-2,3-dihydroxy-3-methylpentanoate + NADP(+) = (S)-2-ethyl-2-hydroxy-3-oxobutanoate + NADPH + H(+). Its pathway is amino-acid biosynthesis; L-isoleucine biosynthesis; L-isoleucine from 2-oxobutanoate: step 2/4. It participates in amino-acid biosynthesis; L-valine biosynthesis; L-valine from pyruvate: step 2/4. Involved in the biosynthesis of branched-chain amino acids (BCAA). Catalyzes an alkyl-migration followed by a ketol-acid reduction of (S)-2-acetolactate (S2AL) to yield (R)-2,3-dihydroxy-isovalerate. In the isomerase reaction, S2AL is rearranged via a Mg-dependent methyl migration to produce 3-hydroxy-3-methyl-2-ketobutyrate (HMKB). In the reductase reaction, this 2-ketoacid undergoes a metal-dependent reduction by NADPH to yield (R)-2,3-dihydroxy-isovalerate. In Mycobacterium sp. (strain JLS), this protein is Ketol-acid reductoisomerase (NADP(+)).